Reading from the N-terminus, the 236-residue chain is Sperm flagellar protein 1 (236 aa).

In terms of domain architecture, Calponin-homology (CH) spans 7–112 (EEALHQLYLW…VLIPLRQRLE (106 aa)). The interval 118–177 (RKQGIGSLQELAPQDGTDYMDVGLSQKARGEGVPDPQGRGQLREGRLPVPRPPGDSQALQ) is disordered. An essential for homodimerization and microtubule bundling activity region spans residues 183–236 (ILQIAEKEQELLASQETVQVLQMKVRRLEHLLQLKNVRIEDLSRRLQQAERKQR).

Homodimer. Interacts with actin, TJP1, CGN and CDH1.

It localises to the cytoplasm. The protein resides in the cell projection. Its subcellular location is the cilium. The protein localises to the flagellum. It is found in the cytoskeleton. It localises to the cilium axoneme. The protein resides in the apical cell membrane. Its subcellular location is the basolateral cell membrane. The protein localises to the stress fiber. It is found in the microvillus. It localises to the lamellipodium. The protein resides in the filopodium. Its function is as follows. Microtubule-associated protein involved in the stabilization of microtubules along the axis of migration during radial intercalation. Promotes the establishment and stabilization of an axis of microtubules required for the active migration of cells into the outer epithelium. Microtubule-associated protein that promotes microtubule bundling and stabilizes microtubules against depolymerization in response to cold shock. Essential for ciliary central apparatus formation which requires both its microtubule-binding and bundling activities and for ciliary localization of HYDIN and SPAG6 in ependymal cilia. Binds actin in intestinal epithelial cells (IECs), essential for IECs survival and contributes to formation of filopodia and lamellipodia in migrating IECs. Regulates planar cell polarity signaling pathway and asymmetric microtubule accumulation in ciliated epithelia. This Bos taurus (Bovine) protein is Sperm flagellar protein 1 (SPEF1).